The sequence spans 361 residues: MYRRLLRPALFRLDPEDAHHLTLRALGLASAVPAWPSLVRRLTAPTDLRLTQTLWGRTFSSPLGLAAGLDKNGEAVPAFGALGFGFVEVGTVTPRAQPGNARPRLFRLPSDEALINRMGFNNAGAEALQGQLAAHFARPVPVWVNIGKNKVTPNEEAVQDYREAVRVLQAVADAFVVNVSSPNTPGLRALQAAGDLAALVRAVLDEVEAGRVRTLSRPPVLVKLAPDLHPADFEASVGAVLEAGADGLIIGNTTLRREGLTHPRRGETGGLSGRPLTARSTELVRAAYRLTRGRMPIVGVGGIFTAEDAYAKIRAGARLVEVYTALIYEGPGLPARLNRDLARLLARDGVRHLTEAVGVDL.

FMN contacts are provided by residues 67–71 and Thr91; that span reads AGLDK. Position 71 (Lys71) interacts with substrate. 116-120 contacts substrate; that stretch reads NRMGF. Positions 145 and 178 each coordinate FMN. Asn178 lines the substrate pocket. Residue Ser181 is the Nucleophile of the active site. Residue Asn183 coordinates substrate. Positions 223 and 251 each coordinate FMN. Residue 252 to 253 coordinates substrate; the sequence is NT. Residues Gly273, Gly302, and 323-324 each bind FMN; that span reads YT.

It belongs to the dihydroorotate dehydrogenase family. Type 2 subfamily. Monomer. It depends on FMN as a cofactor.

The protein localises to the cell membrane. It catalyses the reaction (S)-dihydroorotate + a quinone = orotate + a quinol. It functions in the pathway pyrimidine metabolism; UMP biosynthesis via de novo pathway; orotate from (S)-dihydroorotate (quinone route): step 1/1. Catalyzes the conversion of dihydroorotate to orotate with quinone as electron acceptor. The sequence is that of Dihydroorotate dehydrogenase (quinone) from Deinococcus geothermalis (strain DSM 11300 / CIP 105573 / AG-3a).